A 21-amino-acid chain; its full sequence is Japonicin-2 (21 aa).

A disulfide bridge links cysteine 14 with cysteine 21.

In terms of tissue distribution, expressed by the skin glands.

It localises to the secreted. Functionally, antibacterial activity against the Gram-negative bacterium E.coli and the Gram-positive bacterium S.aureus. The chain is Japonicin-2 from Rana japonica (Japanese reddish frog).